A 170-amino-acid polypeptide reads, in one-letter code: Endoribonuclease YbeY (170 aa).

Zn(2+) is bound by residues His118, His122, and His128.

This sequence belongs to the endoribonuclease YbeY family. The cofactor is Zn(2+).

It localises to the cytoplasm. Functionally, single strand-specific metallo-endoribonuclease involved in late-stage 70S ribosome quality control and in maturation of the 3' terminus of the 16S rRNA. The sequence is that of Endoribonuclease YbeY from Mycobacteroides abscessus (strain ATCC 19977 / DSM 44196 / CCUG 20993 / CIP 104536 / JCM 13569 / NCTC 13031 / TMC 1543 / L948) (Mycobacterium abscessus).